The chain runs to 41 residues: Large ribosomal subunit protein bL36B (41 aa).

It belongs to the bacterial ribosomal protein bL36 family.

This chain is Large ribosomal subunit protein bL36B, found in Vibrio campbellii (strain ATCC BAA-1116).